A 541-amino-acid chain; its full sequence is Membrane protein insertase YidC (541 aa).

5 helical membrane-spanning segments follow: residues 6–26, 349–369, 420–440, 457–477, and 500–520; these read NILL…WQAD, FVGN…GLLF, GGCL…WVLL, LSVQ…MFVM, and MIFT…WLVG.

It belongs to the OXA1/ALB3/YidC family. Type 1 subfamily. Interacts with the Sec translocase complex via SecD. Specifically interacts with transmembrane segments of nascent integral membrane proteins during membrane integration.

The protein resides in the cell inner membrane. Its function is as follows. Required for the insertion and/or proper folding and/or complex formation of integral membrane proteins into the membrane. Involved in integration of membrane proteins that insert both dependently and independently of the Sec translocase complex, as well as at least some lipoproteins. Aids folding of multispanning membrane proteins. The sequence is that of Membrane protein insertase YidC from Shewanella sp. (strain ANA-3).